The sequence spans 294 residues: Bifunctional protein FolD (294 aa).

Residues 166-168 (GRS), S191, and I232 contribute to the NADP(+) site.

Belongs to the tetrahydrofolate dehydrogenase/cyclohydrolase family. As to quaternary structure, homodimer.

It carries out the reaction (6R)-5,10-methylene-5,6,7,8-tetrahydrofolate + NADP(+) = (6R)-5,10-methenyltetrahydrofolate + NADPH. The enzyme catalyses (6R)-5,10-methenyltetrahydrofolate + H2O = (6R)-10-formyltetrahydrofolate + H(+). It participates in one-carbon metabolism; tetrahydrofolate interconversion. Its function is as follows. Catalyzes the oxidation of 5,10-methylenetetrahydrofolate to 5,10-methenyltetrahydrofolate and then the hydrolysis of 5,10-methenyltetrahydrofolate to 10-formyltetrahydrofolate. This is Bifunctional protein FolD from Nitrobacter hamburgensis (strain DSM 10229 / NCIMB 13809 / X14).